A 795-amino-acid chain; its full sequence is Forkhead box protein P4 (795 aa).

The span at 1–25 (MMVESASETIRSAPSGQNGVGSLSA) shows a compositional bias: polar residues. Positions 1 to 62 (MMVESASETI…SGGADSNGEM (62 aa)) are disordered. A compositionally biased stretch (low complexity) spans 36-45 (AGTAPAAGRD). Phosphoserine is present on residues Ser-58 and Ser-92. Lys-181 participates in a covalent cross-link: Glycyl lysine isopeptide (Lys-Gly) (interchain with G-Cter in SUMO2). Disordered regions lie at residues 233–252 (PQLWKGEGAPGQPAEDSGRQ) and 265–310 (TSFA…PLYG). Over residues 292–303 (SRRDSSSHEETP) the composition is skewed to basic and acidic residues. The C2H2-type zinc-finger motif lies at 312 to 337 (GECKWPGCETLCEDLGQFIKHLNTEH). The leucine-zipper stretch occupies residues 354–375 (VQQLEIQLAKESERLQAMMAHL). The interval 379 to 437 (PSEPKPFSQPVTVSADPFPDGLVHPPTSAAAPVTPLRPPGLGSASLHSGGPARRRSNDK) is disordered. Lys-383 participates in a covalent cross-link: Glycyl lysine isopeptide (Lys-Gly) (interchain with G-Cter in SUMO2). Positions 459-549 (RPPFTYASLI…PPKMTGSPTL (91 aa)) form a DNA-binding region, fork-head. A Phosphoserine modification is found at Ser-546. The segment at 589-671 (ASSLLPLSQE…LEEDLGGEDM (83 aa)) is disordered. Positions 609 to 627 (SNGSSSPPRLSPPQYSHQI) are enriched in polar residues. Positions 628–642 (QVKEEPAEAEEDRRP) are enriched in basic and acidic residues.

In terms of assembly, forms homodimers and heterodimers with FOXP1 and FOXP2. Dimerization is required for DNA-binding. In terms of tissue distribution, expressed in the adult heart, brain, spleen lung, liver, kidney and testes.

It is found in the nucleus. In terms of biological role, transcriptional repressor that represses lung-specific expression. This chain is Forkhead box protein P4, found in Mus musculus (Mouse).